The following is a 272-amino-acid chain: MHFYIPPPPISGFWLGPLYVHMYSVFMLAGALVLFELTNRRFIVLTGNREFTAFAVTSLLIPVILGARLWHVVSHTQMYEHQPFYKVFAIWEGGLGFIGGVFSGLICFFVIAKIKKVPPFTFLDALAPGILAALCFARLGNYFNGEVFGTETTLPWGLKLSHEGFKDLNVEKYFHPIFLYEIILNVFIIVILLVLEKRVFVKTVFPKGSVFAAFLVLYGLGRFALEPMRYNLQQNSFGLDLNYVGAAAMIIVGVLIACRHTIASGKLRNSGD.

4 consecutive transmembrane segments (helical) span residues 15 to 35 (LGPL…LVLF), 53 to 73 (AFAV…WHVV), 90 to 110 (IWEG…CFFV), and 117 to 137 (VPPF…LCFA). Arg-138 contacts a 1,2-diacyl-sn-glycero-3-phospho-(1'-sn-glycerol). Transmembrane regions (helical) follow at residues 174 to 194 (FHPI…ILLV), 199 to 219 (VFVK…VLYG), and 237 to 257 (FGLD…VLIA).

Belongs to the Lgt family.

It localises to the cell membrane. It carries out the reaction L-cysteinyl-[prolipoprotein] + a 1,2-diacyl-sn-glycero-3-phospho-(1'-sn-glycerol) = an S-1,2-diacyl-sn-glyceryl-L-cysteinyl-[prolipoprotein] + sn-glycerol 1-phosphate + H(+). Its pathway is protein modification; lipoprotein biosynthesis (diacylglyceryl transfer). Functionally, catalyzes the transfer of the diacylglyceryl group from phosphatidylglycerol to the sulfhydryl group of the N-terminal cysteine of a prolipoprotein, the first step in the formation of mature lipoproteins. This chain is Phosphatidylglycerol--prolipoprotein diacylglyceryl transferase, found in Tropheryma whipplei (strain Twist) (Whipple's bacillus).